Consider the following 142-residue polypeptide: Nucleoside diphosphate kinase (142 aa).

The ATP site is built by Lys-11, Phe-59, Arg-87, Thr-93, Arg-104, and Asn-114. Catalysis depends on His-117, which acts as the Pros-phosphohistidine intermediate.

The protein belongs to the NDK family. As to quaternary structure, homotetramer. The cofactor is Mg(2+).

Its subcellular location is the cytoplasm. It catalyses the reaction a 2'-deoxyribonucleoside 5'-diphosphate + ATP = a 2'-deoxyribonucleoside 5'-triphosphate + ADP. The catalysed reaction is a ribonucleoside 5'-diphosphate + ATP = a ribonucleoside 5'-triphosphate + ADP. Its function is as follows. Major role in the synthesis of nucleoside triphosphates other than ATP. The ATP gamma phosphate is transferred to the NDP beta phosphate via a ping-pong mechanism, using a phosphorylated active-site intermediate. In Pectobacterium atrosepticum (strain SCRI 1043 / ATCC BAA-672) (Erwinia carotovora subsp. atroseptica), this protein is Nucleoside diphosphate kinase.